The chain runs to 677 residues: Protein hook (677 aa).

The Calponin-homology (CH) domain occupies 6–123 (NEMYYSLLEW…RLLQLVLGCA (118 aa)). 2 coiled-coil regions span residues 135 to 436 (EIMC…KCGH) and 478 to 588 (QTAL…AKEV).

It belongs to the hook family. Homodimer. Interacts with microtubules via its N-terminus.

It is found in the cytoplasm. The protein resides in the cytoskeleton. Its subcellular location is the endosome. It localises to the synapse. Involved in endocytic trafficking by stabilizing organelles of the endocytic pathway. Probably acts as a cytoskeletal linker protein required to tether endosome vesicles to the cytoskeleton. Involved in modulation of endocytosis at stages required for down-regulation of membrane proteins that control synapse size. Not involved in synaptic vesicle recycling. Required in R7 cells for boss endocytosis into multivesicular bodies (MVBs). Has a role in regulating adult longevity. The chain is Protein hook from Drosophila persimilis (Fruit fly).